We begin with the raw amino-acid sequence, 75 residues long: Defensin-like protein 58 (75 aa).

Residues 1-23 (MNITKRYVVIFFLVMLTKSLSNS) form the signal peptide. 4 cysteine pairs are disulfide-bonded: Cys39/Cys73, Cys43/Cys66, Cys52/Cys71, and Cys56/Cys72.

Belongs to the DEFL family.

The protein resides in the secreted. The polypeptide is Defensin-like protein 58 (Arabidopsis thaliana (Mouse-ear cress)).